The sequence spans 336 residues: Holliday junction branch migration complex subunit RuvB (336 aa).

Positions 1–182 are large ATPase domain (RuvB-L); the sequence is MKERIVNLET…FGMSFRMQFY (182 aa). Residues Leu-21, Arg-22, Gly-63, Lys-66, Thr-67, Ser-68, 129–131, Arg-172, Tyr-182, and Arg-219 contribute to the ATP site; that span reads EDF. Thr-67 is a Mg(2+) binding site. The tract at residues 183-253 is small ATPAse domain (RuvB-S); that stretch reads SPSELALIIK…ITLHALNELG (71 aa). The head domain (RuvB-H) stretch occupies residues 256-336; the sequence is ELGFDEADLA…IPTLKSQSLF (81 aa). The DNA site is built by Arg-310 and Arg-315.

It belongs to the RuvB family. As to quaternary structure, homohexamer. Forms an RuvA(8)-RuvB(12)-Holliday junction (HJ) complex. HJ DNA is sandwiched between 2 RuvA tetramers; dsDNA enters through RuvA and exits via RuvB. An RuvB hexamer assembles on each DNA strand where it exits the tetramer. Each RuvB hexamer is contacted by two RuvA subunits (via domain III) on 2 adjacent RuvB subunits; this complex drives branch migration. In the full resolvosome a probable DNA-RuvA(4)-RuvB(12)-RuvC(2) complex forms which resolves the HJ.

It localises to the cytoplasm. It carries out the reaction ATP + H2O = ADP + phosphate + H(+). Functionally, the RuvA-RuvB-RuvC complex processes Holliday junction (HJ) DNA during genetic recombination and DNA repair, while the RuvA-RuvB complex plays an important role in the rescue of blocked DNA replication forks via replication fork reversal (RFR). RuvA specifically binds to HJ cruciform DNA, conferring on it an open structure. The RuvB hexamer acts as an ATP-dependent pump, pulling dsDNA into and through the RuvAB complex. RuvB forms 2 homohexamers on either side of HJ DNA bound by 1 or 2 RuvA tetramers; 4 subunits per hexamer contact DNA at a time. Coordinated motions by a converter formed by DNA-disengaged RuvB subunits stimulates ATP hydrolysis and nucleotide exchange. Immobilization of the converter enables RuvB to convert the ATP-contained energy into a lever motion, pulling 2 nucleotides of DNA out of the RuvA tetramer per ATP hydrolyzed, thus driving DNA branch migration. The RuvB motors rotate together with the DNA substrate, which together with the progressing nucleotide cycle form the mechanistic basis for DNA recombination by continuous HJ branch migration. Branch migration allows RuvC to scan DNA until it finds its consensus sequence, where it cleaves and resolves cruciform DNA. In Helicobacter acinonychis (strain Sheeba), this protein is Holliday junction branch migration complex subunit RuvB.